The following is a 93-amino-acid chain: RNA-binding protein Hfq (93 aa).

The Sm domain occupies 9-68 (DPFLNALRKERIPVSIFLVNGIKLQGQIESFDQYVVLLKNAVSQMVYKHAISTVVPARNP). Residues 74–86 (PAMAAGATAAPAA) show a composition bias toward low complexity. The disordered stretch occupies residues 74 to 93 (PAMAAGATAAPAADEGYGNQ).

This sequence belongs to the Hfq family. Homohexamer.

In terms of biological role, RNA chaperone that binds small regulatory RNA (sRNAs) and mRNAs to facilitate mRNA translational regulation in response to envelope stress, environmental stress and changes in metabolite concentrations. Also binds with high specificity to tRNAs. The polypeptide is RNA-binding protein Hfq (Alcanivorax borkumensis (strain ATCC 700651 / DSM 11573 / NCIMB 13689 / SK2)).